Here is a 496-residue protein sequence, read N- to C-terminus: D-2-hydroxyglutarate--pyruvate transhydrogenase DLD3 (496 aa).

A Glycyl lysine isopeptide (Lys-Gly) (interchain with G-Cter in ubiquitin) cross-link involves residue Lys-17. The FAD-binding PCMH-type domain maps to 64–243; sequence YRGQSNLILL…TGVSIVAAAK (180 aa).

This sequence belongs to the FAD-binding oxidoreductase/transferase type 4 family. The cofactor is FAD.

It is found in the cytoplasm. The enzyme catalyses (R)-lactate + 2 Fe(III)-[cytochrome c] = 2 Fe(II)-[cytochrome c] + pyruvate + 2 H(+). The catalysed reaction is (R)-2-hydroxyglutarate + pyruvate = (R)-lactate + 2-oxoglutarate. Functionally, catalyzes the reversible oxidation of (R)-2-hydroxyglutarate to 2-oxoglutarate coupled to reduction of pyruvate to (R)-lactate. Can also use oxaloacetate as electron acceptor instead of pyruvate producing (R)-malate. In Saccharomyces cerevisiae (strain ATCC 204508 / S288c) (Baker's yeast), this protein is D-2-hydroxyglutarate--pyruvate transhydrogenase DLD3 (DLD3).